Reading from the N-terminus, the 345-residue chain is Protein-glutamate methylesterase/protein-glutamine glutaminase 2 (345 aa).

A Response regulatory domain is found at 7-124 (KVLVVDDSPV…TADMLGYRSL (118 aa)). Residue Asp-58 is modified to 4-aspartylphosphate. Residues 154–345 (STSQYQLIAI…LPQFLCDLLS (192 aa)) enclose the CheB-type methylesterase domain. Residues Ser-166, His-192, and Asp-289 contribute to the active site.

It belongs to the CheB family. Phosphorylated by CheA. Phosphorylation of the N-terminal regulatory domain activates the methylesterase activity.

Its subcellular location is the cytoplasm. The enzyme catalyses [protein]-L-glutamate 5-O-methyl ester + H2O = L-glutamyl-[protein] + methanol + H(+). It carries out the reaction L-glutaminyl-[protein] + H2O = L-glutamyl-[protein] + NH4(+). In terms of biological role, involved in chemotaxis. Part of a chemotaxis signal transduction system that modulates chemotaxis in response to various stimuli. Catalyzes the demethylation of specific methylglutamate residues introduced into the chemoreceptors (methyl-accepting chemotaxis proteins or MCP) by CheR. Also mediates the irreversible deamidation of specific glutamine residues to glutamic acid. The polypeptide is Protein-glutamate methylesterase/protein-glutamine glutaminase 2 (Vibrio vulnificus (strain YJ016)).